Here is a 328-residue protein sequence, read N- to C-terminus: Phosphate acetyltransferase (328 aa).

Belongs to the phosphate acetyltransferase and butyryltransferase family.

It is found in the cytoplasm. It carries out the reaction acetyl-CoA + phosphate = acetyl phosphate + CoA. Its pathway is metabolic intermediate biosynthesis; acetyl-CoA biosynthesis; acetyl-CoA from acetate: step 2/2. In Thermoanaerobacterium thermosaccharolyticum (strain ATCC 7956 / DSM 571 / NCIMB 9385 / NCA 3814 / NCTC 13789 / WDCM 00135 / 2032) (Clostridium thermosaccharolyticum), this protein is Phosphate acetyltransferase (pta).